The primary structure comprises 114 residues: Chaperone protein YscY (114 aa).

Binds to YscX.

The protein localises to the cytoplasm. Required for Yop secretion. Functions probably as a chaperone which stabilizes YscX within the cell, before its secretion. In Yersinia enterocolitica serotype O:8 / biotype 1B (strain NCTC 13174 / 8081), this protein is Chaperone protein YscY (yscY).